A 628-amino-acid polypeptide reads, in one-letter code: tRNA 5-methylaminomethyl-2-thiouridine biosynthesis bifunctional protein MnmC (628 aa).

A tRNA (mnm(5)s(2)U34)-methyltransferase region spans residues 1–237 (MSSYSPLVPP…KWHMTVGVRE (237 aa)). Positions 265–628 (VGGGLAGAGI…ADLLAAVAPR (364 aa)) are FAD-dependent cmnm(5)s(2)U34 oxidoreductase.

The protein in the N-terminal section; belongs to the methyltransferase superfamily. tRNA (mnm(5)s(2)U34)-methyltransferase family. This sequence in the C-terminal section; belongs to the DAO family. FAD is required as a cofactor.

It is found in the cytoplasm. It carries out the reaction 5-aminomethyl-2-thiouridine(34) in tRNA + S-adenosyl-L-methionine = 5-methylaminomethyl-2-thiouridine(34) in tRNA + S-adenosyl-L-homocysteine + H(+). In terms of biological role, catalyzes the last two steps in the biosynthesis of 5-methylaminomethyl-2-thiouridine (mnm(5)s(2)U) at the wobble position (U34) in tRNA. Catalyzes the FAD-dependent demodification of cmnm(5)s(2)U34 to nm(5)s(2)U34, followed by the transfer of a methyl group from S-adenosyl-L-methionine to nm(5)s(2)U34, to form mnm(5)s(2)U34. This chain is tRNA 5-methylaminomethyl-2-thiouridine biosynthesis bifunctional protein MnmC, found in Bordetella petrii (strain ATCC BAA-461 / DSM 12804 / CCUG 43448).